A 506-amino-acid polypeptide reads, in one-letter code: NAD(P)H-quinone oxidoreductase subunit 2 (506 aa).

Transmembrane regions (helical) follow at residues 14–34, 42–62, 79–99, 108–128, 132–152, 167–187, 206–226, 240–260, 276–296, 302–322, 330–350, 374–394, and 409–429; these read AIIP…VDLA, WAPI…ALQW, LAIA…LISW, PIGE…LLCG, LISI…LSGY, LLVG…LYGL, FITS…IAAV, PTPV…AFAI, LLFT…ALAQ, MLAY…VSGT, VLYL…VILF, LGLS…GFFG, and LLVI…ISVI.

It belongs to the complex I subunit 2 family. As to quaternary structure, NDH-1 can be composed of about 15 different subunits; different subcomplexes with different compositions have been identified which probably have different functions.

It is found in the cellular thylakoid membrane. The enzyme catalyses a plastoquinone + NADH + (n+1) H(+)(in) = a plastoquinol + NAD(+) + n H(+)(out). It catalyses the reaction a plastoquinone + NADPH + (n+1) H(+)(in) = a plastoquinol + NADP(+) + n H(+)(out). Functionally, NDH-1 shuttles electrons from an unknown electron donor, via FMN and iron-sulfur (Fe-S) centers, to quinones in the respiratory and/or the photosynthetic chain. The immediate electron acceptor for the enzyme in this species is believed to be plastoquinone. Couples the redox reaction to proton translocation, and thus conserves the redox energy in a proton gradient. Cyanobacterial NDH-1 also plays a role in inorganic carbon-concentration. The chain is NAD(P)H-quinone oxidoreductase subunit 2 from Prochlorococcus marinus (strain MIT 9312).